We begin with the raw amino-acid sequence, 555 residues long: Phosphomethylpyrimidine synthase (555 aa).

Residues 78–104 (VRDRWGFDNGSAESTKGELSMSERKPR) are disordered. Residues N191, M220, Y249, H285, 305 to 307 (SRG), 346 to 349 (DALR), and E385 contribute to the substrate site. A Zn(2+)-binding site is contributed by H389. Y412 contributes to the substrate binding site. Residue H453 coordinates Zn(2+). The [4Fe-4S] cluster site is built by C535, C538, and C543.

This sequence belongs to the ThiC family. [4Fe-4S] cluster serves as cofactor.

The catalysed reaction is 5-amino-1-(5-phospho-beta-D-ribosyl)imidazole + S-adenosyl-L-methionine = 4-amino-2-methyl-5-(phosphooxymethyl)pyrimidine + CO + 5'-deoxyadenosine + formate + L-methionine + 3 H(+). Its pathway is cofactor biosynthesis; thiamine diphosphate biosynthesis. Catalyzes the synthesis of the hydroxymethylpyrimidine phosphate (HMP-P) moiety of thiamine from aminoimidazole ribotide (AIR) in a radical S-adenosyl-L-methionine (SAM)-dependent reaction. This is Phosphomethylpyrimidine synthase from Chlorobaculum parvum (strain DSM 263 / NCIMB 8327) (Chlorobium vibrioforme subsp. thiosulfatophilum).